The primary structure comprises 455 residues: Bifunctional protein GlmU (455 aa).

The segment at 1-230 (MTKRNAIILA…FDESMGVNDR (230 aa)) is pyrophosphorylase. Residues 9-12 (LAAG), lysine 23, glutamine 73, 78-79 (GT), 101-103 (SGD), glycine 140, glutamate 155, asparagine 170, and asparagine 228 contribute to the UDP-N-acetyl-alpha-D-glucosamine site. Aspartate 103 is a binding site for Mg(2+). Asparagine 228 is a Mg(2+) binding site. A linker region spans residues 231 to 251 (VALARANKVMRNRINTHWMRE). The interval 252-455 (GVSMIDPETT…KENYAKKLPW (204 aa)) is N-acetyltransferase. Positions 333 and 351 each coordinate UDP-N-acetyl-alpha-D-glucosamine. Histidine 363 acts as the Proton acceptor in catalysis. UDP-N-acetyl-alpha-D-glucosamine contacts are provided by tyrosine 366 and asparagine 377. Residues 386-387 (NY), serine 405, alanine 423, and arginine 440 contribute to the acetyl-CoA site.

In the N-terminal section; belongs to the N-acetylglucosamine-1-phosphate uridyltransferase family. This sequence in the C-terminal section; belongs to the transferase hexapeptide repeat family. Homotrimer. Mg(2+) serves as cofactor.

Its subcellular location is the cytoplasm. It catalyses the reaction alpha-D-glucosamine 1-phosphate + acetyl-CoA = N-acetyl-alpha-D-glucosamine 1-phosphate + CoA + H(+). It carries out the reaction N-acetyl-alpha-D-glucosamine 1-phosphate + UTP + H(+) = UDP-N-acetyl-alpha-D-glucosamine + diphosphate. The protein operates within nucleotide-sugar biosynthesis; UDP-N-acetyl-alpha-D-glucosamine biosynthesis; N-acetyl-alpha-D-glucosamine 1-phosphate from alpha-D-glucosamine 6-phosphate (route II): step 2/2. Its pathway is nucleotide-sugar biosynthesis; UDP-N-acetyl-alpha-D-glucosamine biosynthesis; UDP-N-acetyl-alpha-D-glucosamine from N-acetyl-alpha-D-glucosamine 1-phosphate: step 1/1. It functions in the pathway bacterial outer membrane biogenesis; LPS lipid A biosynthesis. Its function is as follows. Catalyzes the last two sequential reactions in the de novo biosynthetic pathway for UDP-N-acetylglucosamine (UDP-GlcNAc). The C-terminal domain catalyzes the transfer of acetyl group from acetyl coenzyme A to glucosamine-1-phosphate (GlcN-1-P) to produce N-acetylglucosamine-1-phosphate (GlcNAc-1-P), which is converted into UDP-GlcNAc by the transfer of uridine 5-monophosphate (from uridine 5-triphosphate), a reaction catalyzed by the N-terminal domain. This is Bifunctional protein GlmU from Limosilactobacillus reuteri (strain DSM 20016) (Lactobacillus reuteri).